The sequence spans 492 residues: Proline--tRNA ligase (492 aa).

This sequence belongs to the class-II aminoacyl-tRNA synthetase family. ProS type 3 subfamily. In terms of assembly, homodimer.

The protein resides in the cytoplasm. It catalyses the reaction tRNA(Pro) + L-proline + ATP = L-prolyl-tRNA(Pro) + AMP + diphosphate. Functionally, catalyzes the attachment of proline to tRNA(Pro) in a two-step reaction: proline is first activated by ATP to form Pro-AMP and then transferred to the acceptor end of tRNA(Pro). The sequence is that of Proline--tRNA ligase from Flavobacterium johnsoniae (strain ATCC 17061 / DSM 2064 / JCM 8514 / BCRC 14874 / CCUG 350202 / NBRC 14942 / NCIMB 11054 / UW101) (Cytophaga johnsonae).